A 268-amino-acid polypeptide reads, in one-letter code: MSRLQTRFAQLKQENRAALVTFVTAGDPDYASSLEILKGLPAAGADVIELGMPFTDPMADGPAIQLANIRALDGGQTLARTLQMVREFRSGESETPLVLMGYFNPIHHYGVERFIAEAKEVGVDGLIVVDLPPEHNEDLCHPAQAAGLDFIRLTTPTTGDQRLPTVLEGSSGFVYYVSVAGVTGANAATLEHVEEAVARLRRHTDLPIGIGFGIRSAEHAAAVARLADGVVVGSALIDRIAKARDNAQAVKDVLALCGELAEGVRNAR.

Active-site proton acceptor residues include Glu49 and Asp60.

This sequence belongs to the TrpA family. Tetramer of two alpha and two beta chains.

It carries out the reaction (1S,2R)-1-C-(indol-3-yl)glycerol 3-phosphate + L-serine = D-glyceraldehyde 3-phosphate + L-tryptophan + H2O. It participates in amino-acid biosynthesis; L-tryptophan biosynthesis; L-tryptophan from chorismate: step 5/5. The alpha subunit is responsible for the aldol cleavage of indoleglycerol phosphate to indole and glyceraldehyde 3-phosphate. The chain is Tryptophan synthase alpha chain from Pseudomonas aeruginosa (strain LESB58).